Reading from the N-terminus, the 109-residue chain is NAD(P)H-quinone oxidoreductase subunit M (109 aa).

It belongs to the complex I NdhM subunit family. In terms of assembly, NDH-1 can be composed of about 15 different subunits; different subcomplexes with different compositions have been identified which probably have different functions.

The protein resides in the cellular thylakoid membrane. The enzyme catalyses a plastoquinone + NADH + (n+1) H(+)(in) = a plastoquinol + NAD(+) + n H(+)(out). The catalysed reaction is a plastoquinone + NADPH + (n+1) H(+)(in) = a plastoquinol + NADP(+) + n H(+)(out). Its function is as follows. NDH-1 shuttles electrons from an unknown electron donor, via FMN and iron-sulfur (Fe-S) centers, to quinones in the respiratory and/or the photosynthetic chain. The immediate electron acceptor for the enzyme in this species is believed to be plastoquinone. Couples the redox reaction to proton translocation, and thus conserves the redox energy in a proton gradient. Cyanobacterial NDH-1 also plays a role in inorganic carbon-concentration. In Microcystis aeruginosa (strain NIES-843 / IAM M-2473), this protein is NAD(P)H-quinone oxidoreductase subunit M.